The primary structure comprises 228 residues: MSDPAPEVASAVPVASPAKAKKEKKPKTDKPKKAKAPRTHPPVSEMVVNAIKTLKERGGSSLQAIKKFLAAQYKVDVDKLAPFIKKYLRGAVTKGELLQTKGKGASGSFKLPAAAKKEKVAKTPKKAAGEKKPQAAAKPKKALEKKKSIAKKPKAATATKVKKPVAKSTKKPAAVKPAAKKAAPKPKAAPKPKAATKPKKEVKPKKVAAKKPAEKKPEAAKKPAAKKA.

Over residues Met1–Ala18 the composition is skewed to low complexity. Disordered regions lie at residues Met1–Ser44 and Leu98–Ala228. Residues Thr39 to Ala113 form the H15 domain. The span at Ala115 to Pro133 shows a compositional bias: basic and acidic residues. Basic residues-rich tracts occupy residues Ser148–Lys170 and Ala178–Ala209. Residues Lys211–Lys221 are compositionally biased toward basic and acidic residues.

It belongs to the histone H1/H5 family.

It localises to the nucleus. Its subcellular location is the chromosome. Its function is as follows. Histones H1 are necessary for the condensation of nucleosome chains into higher-order structures. In Glyptotendipes barbipes (Midge), this protein is Histone H1-III.